A 287-amino-acid polypeptide reads, in one-letter code: Oxaloacetate decarboxylase (287 aa).

A substrate-binding site is contributed by Ser50. Asp88 lines the Mg(2+) pocket. Residues Arg159 and His235 each contribute to the substrate site.

Belongs to the isocitrate lyase family. Oxaloacetate decarboxylase subfamily. As to quaternary structure, homotetramer; dimer of dimers. Mg(2+) is required as a cofactor.

It catalyses the reaction oxaloacetate + H(+) = pyruvate + CO2. Functionally, catalyzes the decarboxylation of oxaloacetate into pyruvate. Seems to play a role in maintaining cellular concentrations of bicarbonate and pyruvate. The sequence is that of Oxaloacetate decarboxylase from Pseudomonas aeruginosa (strain LESB58).